The sequence spans 240 residues: Cilia- and flagella-associated protein 77 (240 aa).

This sequence belongs to the CFAP77 family.

It localises to the cytoplasm. The protein localises to the cytoskeleton. It is found in the cilium axoneme. The protein resides in the flagellum axoneme. Its function is as follows. Microtubule inner protein (MIP) part of the dynein-decorated doublet microtubules (DMTs) in cilia axoneme, which is required for motile cilia beating. The polypeptide is Cilia- and flagella-associated protein 77 (Danio rerio (Zebrafish)).